The following is a 327-amino-acid chain: Glutaminase (327 aa).

Substrate is bound by residues Ser-92, Asn-143, Asn-195, Tyr-218, Tyr-263, and Val-281.

This sequence belongs to the glutaminase family. As to quaternary structure, homotetramer.

The catalysed reaction is L-glutamine + H2O = L-glutamate + NH4(+). The chain is Glutaminase from Synechocystis sp. (strain ATCC 27184 / PCC 6803 / Kazusa).